We begin with the raw amino-acid sequence, 717 residues long: F-box only protein 42 (717 aa).

The span at methionine 1–glutamate 30 shows a compositional bias: acidic residues. The segment at methionine 1 to proline 34 is disordered. Positions asparagine 44–phenylalanine 93 constitute an F-box domain. Kelch repeat units lie at residues serine 132 to aspartate 184, leucine 186 to aspartate 242, methionine 244 to aspartate 293, and threonine 295 to histidine 342. The tract at residues arginine 361–glycine 452 is disordered. Low complexity predominate over residues proline 363–serine 376. Serine 365 and serine 373 each carry phosphoserine. A Phosphothreonine modification is found at threonine 378. Positions glutamine 416–glycine 426 are enriched in polar residues. Serine 552 bears the Phosphoserine mark. The span at glycine 570 to serine 595 shows a compositional bias: low complexity. The segment at glycine 570 to glycine 632 is disordered.

Component of some SCF complex, composed of CUL1, SKP1, RBX1 and FBXO42. Interacts (via the kelch domain) with p53/TP53; interaction is direct.

In terms of biological role, substrate-recognition component of some SCF (SKP1-CUL1-F-box protein)-type E3 ubiquitin ligase complex. Specifically recognizes p53/TP53, promoting its ubiquitination and degradation. This Mus musculus (Mouse) protein is F-box only protein 42 (Fbxo42).